The sequence spans 436 residues: Hydrolyase ccsE (436 aa).

Residue Ser249 is the Nucleophile of the active site.

Belongs to the AB hydrolase superfamily. FUS2 hydrolase family. Homodimer.

Its pathway is mycotoxin biosynthesis. Its function is as follows. Hydrolyase; part of the gene cluster that mediates the biosynthesis of a family of the mycotoxins cytochalasins E and K. The hybrid PKS-NRPS synthetase ccsA and the enoyl reductase ccsC are responsible for fusion of phenylalanine with an octaketide backbone and subsequent release of the stable tetramic acid precursor. The polyketide synthase module (PKS) of the PKS-NRPS ccsA is responsible for the synthesis of the octaketide backbone. The downstream nonribosomal peptide synthetase (NRPS) amidates the carboxyl end of the octaketide with a phenylalanine. A reductase-like domain (R) at the C-terminus catalyzes the reductive release of the polyketide-amino acid intermediate. Because ccsA lacks a designated enoylreductase (ER) domain, the required activity is provided the enoyl reductase ccsC. Upon formation of the 11-membered carbocycle-fused perhydroisoindolone intermediate, a number of oxidative steps are required to afford the final cytochalasin E and K, including two hydroxylations at C17 and C18, one alcohol oxidation at C17, one epoxidation at C6 and C7 and two Baeyer-Villiger oxidations. The oxidative modification at C17, C18 and the C6-C7 epoxidation are likely to be catalyzed by the two cytochrome P450 oxygenases ccsD and ccsG. CcsD may be responsible for the epoxidation of the C6-C7 double bond. CcsG may be responsible for the successive oxidative modifications at C17 and C18. The double Baeyer-Villiger oxidations of ketocytochalasin to precytochalasin and cytochalasin Z(16) are among the final steps leading to cytochalasin E and K and are catalyzed by ccsB. The first oxygen insertion step follows that of the classic BVMO mechanism, generating the ester precytochalasin. Release of precytochalasin into an aqueous environment can generate the shunt product iso-precytochalasin through spontaneous isomerization. Alternatively, precytochalasin can undergo further oxidation by ccsB to yield the in-line carbonate-containing cytochalasin Z(16). Cytochalasin Z(16) is a precursor to cytochalasin E and cytochalasin K, whereas iso-precytochalasin is a precursor to cytochalasin Z(17) and rosellichalasin. The hydrolyase ccsE may catalyze hydrolysis of epoxide bond in cytochalasin E to afford cytochalasin K. The function of ccsF has not been assigned but it may play a role in post-PKS-NRPS biosynthetic step, resistance or transport of cytochalasins and related PKS-NRPS products. The sequence is that of Hydrolyase ccsE from Aspergillus clavatus (strain ATCC 1007 / CBS 513.65 / DSM 816 / NCTC 3887 / NRRL 1 / QM 1276 / 107).